The chain runs to 84 residues: Cell division topological specificity factor (84 aa).

This sequence belongs to the MinE family.

Prevents the cell division inhibition by proteins MinC and MinD at internal division sites while permitting inhibition at polar sites. This ensures cell division at the proper site by restricting the formation of a division septum at the midpoint of the long axis of the cell. This chain is Cell division topological specificity factor, found in Rhodopseudomonas palustris (strain BisA53).